A 1214-amino-acid polypeptide reads, in one-letter code: MATLIPVNGGHPAASGQSSNVEATYEDMFKEITRKLYGEETGNGLHTLGTPVAQVATSGPTAVPEGEQRSFTNLQQLDRSAAPSIEYESSAAGASGNNVATTQANVIQQQQQQQQQAESGNSVVVTASSGATVVPAPSVAAVGGFKSEDHLSTAFGLAALMQNGFAAGQAGLLKAGEQQQRWAQDGSGLVAAAAAEPQLVQWTSGGKLQSYAHVNQQQQQQQQPHQSTPKSKKHRQEHAAELIYASPSTSANAAQNLAQSTPTSAPSNSSGGSTSSSGGGGGRKKAAQAAAAAAAANGVHIQKRYACTHCPYSTDRRDLYTRHENIHKDEKPFQCYACLKQFNRADHVKKHFLRMHRELQYDINKTRRHVSAGSGSSGSGSSGSGSHHSGGRGNVTINSAGVNIDNAFLEAQRHPTSSSMSIVETIEAVASATDMPLAQLKQEKMDDGAGVVLPLHVGVMQQPVASSSSGSSGSHGGNGNGGSGSGLLKPKREKRFTCCYCPWSGADKWGLKRHLNTHTKPFVCLLCDYKAARSERLATHVLKVHNKRACSKCSYLADTQEEYQAHMSDVHGNVGNANGGGGAVTIYTTTTNEGVAGGGGGGGGGISGNISGGGPLQEIIVNPSSMVGWRLSANGSLIPPHDLLTGGLPNAATQKRGSERLFQYLEAEGSDPEDYARLLKMDAISRNTASVAQDFHKAGGVHELKIPANHQLLFNNKLPSQWTTREAAALLYSLSNMGGGSASSVSGSQRQKFGMRARQHSTGEDDENTPSSASSSSFSGDEFNMSATSPLKLSRHAIKLEKMDEMDAKDMGPTKAMMATAFLEAANYEQTAIELLASKRKIKVENDNDEDQENQQHQPHQQHHSQQQQQQRLQLIKSSPAYKLNNNNNNNSNNNNYYKDKTSHRNAVHHHRQDDKENNKTKSPGTAAVSVAAAAATSPPSISGPSNQTPFLTQMEYQNLNRIGTQFQNYVKDIINKYYAAETPLMLAAAAAALPTATTTGQQQQPELDIENLSPSKRRRLLSETEEYIEYLRNKEDITLTIAPKVQPPAPVTSLLKRQLDLSTPRRSPKKAAPAHSNSASNASRKSLNQLATLLPLLADAASQQEYLAAPLDFSKKSSSRKQAQPKKIRLTPEAVVTLLRDKYLNRMVRQRLGCLKCNQLRKNSSISFNYHTLGSLALHKYWRHGRLGSSSTRREKLQAALQKRISRGQADKC.

Disordered stretches follow at residues 1 to 20 (MATLIPVNGGHPAASGQSSN), 213 to 238 (HVNQQQQQQQQPHQSTPKSKKHRQEH), and 250 to 284 (SANAAQNLAQSTPTSAPSNSSGGSTSSSGGGGGRK). The span at 258–276 (AQSTPTSAPSNSSGGSTSS) shows a compositional bias: low complexity. C2H2-type zinc fingers lie at residues 305–327 (YACTHCPYSTDRRDLYTRHENIH) and 333–356 (FQCYACLKQFNRADHVKKHFLRMH). 2 disordered regions span residues 367–397 (RRHVSAGSGSSGSGSSGSGSHHSGGRGNVTI) and 463–488 (PVASSSSGSSGSHGGNGNGGSGSGLL). A compositionally biased stretch (gly residues) spans 473–485 (GSHGGNGNGGSGS). C2H2-type zinc fingers lie at residues 496–518 (FTCCYCPWSGADKWGLKRHLNTH) and 522–545 (FVCLLCDYKAARSERLATHVLKVH). Disordered stretches follow at residues 741–790 (SASS…ATSP), 848–946 (NDED…SGPS), and 1062–1084 (LSTPRRSPKKAAPAHSNSASNAS). Low complexity-rich tracts occupy residues 855–871 (QQHQPHQQHHSQQQQQQ), 885–896 (NNNNNNNSNNNN), 923–946 (SPGTAAVSVAAAAATSPPSISGPS), and 1071–1084 (KAAPAHSNSASNAS).

As to expression, expressed in the PNS and CNS. In early blastoderm stages, it is ubiquitously expressed, then, before stage 5, it disappears from the poles of the embryo and faint stripes are visible. At stage 5, it also accumulates in the dorsal region, cephalic furrow ectodermal patches between the tracheal pits, where neurons of the PNS appear. In older embryos (stage 15) a strong expression is mostly restricted to the central nervous system (CNS) and PNS. In PNS, the pattern suggests that expression occur in many of the neurons of the ventral, lateral and dorsal clusters of neurons. In third instar wing disks, it is expressed in rows of cells on either side of the prospective anterior wing margin and in groups of cells that coincide with proneural clusters of ac/sc expression. Also expressed independently of ac/sc in certain areas of the disk, such as the postnotum and posterior dorsal proximal wing. Expressed in the proneural clusters of the leg disks and in the eye/antenna disk.

The protein localises to the nucleus. Its function is as follows. Probable transcription factor involved in the development of the adult pattern of macrochaetae. Required for accumulation of achaete (ac) and scute (sc) in proneural clusters. Probably acts by binding to the proneural cluster-specific enhancers of the ac/sc complex and increasing enhancer efficiency, thereby acting as a stimulator of ac/sc expression in proneural clusters. Also required for correct development of the embryonic/larval peripheral nervous system (PNS). The chain is Protein charlatan (chn) from Drosophila melanogaster (Fruit fly).